A 435-amino-acid chain; its full sequence is Cyclin-dependent kinase 15 (435 aa).

A Protein kinase domain is found at 103-387 (YLNLEKLGEG…AQEALVHDYF (285 aa)). ATP-binding positions include 109–117 (LGEGSYATV) and Lys132. Asp224 (proton acceptor) is an active-site residue.

It belongs to the protein kinase superfamily. CMGC Ser/Thr protein kinase family. CDC2/CDKX subfamily. It depends on Mg(2+) as a cofactor.

It carries out the reaction L-seryl-[protein] + ATP = O-phospho-L-seryl-[protein] + ADP + H(+). The enzyme catalyses L-threonyl-[protein] + ATP = O-phospho-L-threonyl-[protein] + ADP + H(+). In terms of biological role, serine/threonine-protein kinase that acts like an antiapoptotic protein that counters TRAIL/TNFSF10-induced apoptosis by inducing phosphorylation of BIRC5 at 'Thr-34'. The polypeptide is Cyclin-dependent kinase 15 (CDK15) (Homo sapiens (Human)).